The primary structure comprises 384 residues: Dual-specificity RNA methyltransferase RlmN (384 aa).

The active-site Proton acceptor is the E105. The region spanning 111-350 (EDDRATLCVS…TIVRKTRGDD (240 aa)) is the Radical SAM core domain. A disulfide bridge connects residues C118 and C355. Residues C125, C129, and C132 each contribute to the [4Fe-4S] cluster site. S-adenosyl-L-methionine-binding positions include 179–180 (GE), S211, 233–235 (SLH), and N312. C355 serves as the catalytic S-methylcysteine intermediate.

Belongs to the radical SAM superfamily. RlmN family. It depends on [4Fe-4S] cluster as a cofactor.

It is found in the cytoplasm. The catalysed reaction is adenosine(2503) in 23S rRNA + 2 reduced [2Fe-2S]-[ferredoxin] + 2 S-adenosyl-L-methionine = 2-methyladenosine(2503) in 23S rRNA + 5'-deoxyadenosine + L-methionine + 2 oxidized [2Fe-2S]-[ferredoxin] + S-adenosyl-L-homocysteine. The enzyme catalyses adenosine(37) in tRNA + 2 reduced [2Fe-2S]-[ferredoxin] + 2 S-adenosyl-L-methionine = 2-methyladenosine(37) in tRNA + 5'-deoxyadenosine + L-methionine + 2 oxidized [2Fe-2S]-[ferredoxin] + S-adenosyl-L-homocysteine. Its function is as follows. Specifically methylates position 2 of adenine 2503 in 23S rRNA and position 2 of adenine 37 in tRNAs. m2A2503 modification seems to play a crucial role in the proofreading step occurring at the peptidyl transferase center and thus would serve to optimize ribosomal fidelity. This chain is Dual-specificity RNA methyltransferase RlmN, found in Escherichia fergusonii (strain ATCC 35469 / DSM 13698 / CCUG 18766 / IAM 14443 / JCM 21226 / LMG 7866 / NBRC 102419 / NCTC 12128 / CDC 0568-73).